The chain runs to 462 residues: MNTSPKTLKTIAILGQPNVGKSSLFNRLARERIAITSDFAGTTRDINKRKIALNGHEVELLDTGGMAKDALLSKEIKALNLKAAQMSDLILYVVDGKSIPSDEDIKLFREVFKINPNCFLVINKIDNDKEKERAYAFSSFGTPKSFNISVSHNRGISALIDAVLNALNLNQIIEQDLDADILESLETPNNALEETKEEEIIQVGIIGRVNVGKSSLLNALTKKERSLVSSVAGTTIDPIDETILIGDQKICFVDTAGIRHRGKILGIEKYALERTQKALEKSHIALLVLDVSTPFVELDEKISSLADKHSLGIILILNKWDIRYAPYEEIMATLKRKFRFLEYAPVITTSCLKARHIDEIKHKIIEVYECFSKRIPTSLLNSVISQATQKHPLPSDGGKLVKVYYATQFATKPPQISLIMNRPKALHFSYKRYLINTLRKEFNFLGTPLILNAKDKKSAQQN.

EngA-type G domains are found at residues 9–171 (KTIA…NLNQ) and 201–372 (IQVG…ECFS). Residues 15-22 (GQPNVGKS), 62-66 (DTGGM), 123-126 (NKID), 207-214 (GRVNVGKS), 254-258 (DTAGI), and 318-321 (NKWD) contribute to the GTP site. The region spanning 373 to 457 (KRIPTSLLNS…PLILNAKDKK (85 aa)) is the KH-like domain.

The protein belongs to the TRAFAC class TrmE-Era-EngA-EngB-Septin-like GTPase superfamily. EngA (Der) GTPase family. In terms of assembly, associates with the 50S ribosomal subunit.

Functionally, GTPase that plays an essential role in the late steps of ribosome biogenesis. The sequence is that of GTPase Der from Helicobacter pylori (strain P12).